A 313-amino-acid chain; its full sequence is 2,3-dihydroxyphenylpropionate/2,3-dihydroxicinnamic acid 1,2-dioxygenase (313 aa).

H116 (proton donor) is an active-site residue. H180 functions as the Proton acceptor in the catalytic mechanism.

The protein belongs to the LigB/MhpB extradiol dioxygenase family. As to quaternary structure, homotetramer. Requires Fe(2+) as cofactor.

The catalysed reaction is 3-(2,3-dihydroxyphenyl)propanoate + O2 = (2Z,4E)-2-hydroxy-6-oxonona-2,4-dienedioate + H(+). It carries out the reaction (2E)-3-(2,3-dihydroxyphenyl)prop-2-enoate + O2 = (2Z,4E,7E)-2-hydroxy-6-oxonona-2,4,7-trienedioate + H(+). The protein operates within aromatic compound metabolism; 3-phenylpropanoate degradation. In terms of biological role, catalyzes the non-heme iron(II)-dependent oxidative cleavage of 2,3-dihydroxyphenylpropionic acid and 2,3-dihydroxicinnamic acid into 2-hydroxy-6-ketononadienedioate and 2-hydroxy-6-ketononatrienedioate, respectively. The sequence is that of 2,3-dihydroxyphenylpropionate/2,3-dihydroxicinnamic acid 1,2-dioxygenase from Mycobacterium sp. (strain MCS).